A 594-amino-acid chain; its full sequence is Class I diterpene synthase TPS6, chloroplastic (594 aa).

Mg(2+)-binding residues include D330, D334, N474, Q477, and E482. The DDXXD motif signature appears at 330–334 (DDFFD).

Belongs to the terpene synthase family. Requires Mg(2+) as cofactor. Mostly expressed in trichomes of leaves and fruits.

It localises to the plastid. It is found in the chloroplast. The enzyme catalyses peregrinol diphosphate = labd-13(16),14-diene-9-ol + diphosphate. It catalyses the reaction 9alpha-copalyl diphosphate = syn-isopimara-7,15-diene + diphosphate. The protein operates within secondary metabolite biosynthesis; terpenoid biosynthesis. Its function is as follows. Involved in the biosynthesis of labdane-type diterpenoid including cleroda-dienols, and peregrinol lactones and furan derivatives, dopaminergic diterpenoids that can bind to dopamine receptors in the human pituitary gland, have probably ability to lower prolactin levels, and are used to treat menstrual cycle disorders (e.g. premenstrual syndrome and mastodynia). Terpene synthase the catalyzes the conversion of peregrinol diphosphate to labda-13(16),14-dien-9-ol, and of syn-copalyl diphosophate to dehydroabietadiene and syn-isopimara-7,15-diene. This Vitex agnus-castus (Chaste tree) protein is Class I diterpene synthase TPS6, chloroplastic.